The following is a 257-amino-acid chain: Lipid A 4'-phosphatase (257 aa).

The next 6 membrane-spanning stretches (helical) occupy residues 21 to 41, 85 to 105, 119 to 139, 174 to 194, 201 to 221, and 225 to 245; these read FGAF…FRAF, IFFR…IECY, KLKV…NVIL, CSFV…LLFV, ALVP…LSFG, and LSDV…LLAL.

It belongs to the lipid A LpxF 4'-phosphatase family.

The protein localises to the cell inner membrane. It participates in bacterial outer membrane biogenesis; LPS lipid A biosynthesis. Probably removes the 4'-phosphate moiety from lipid A species. Not seen to act on other membrane components, nor does it dephosphorylate the 1-phosphate group of lipid A and/or lipid A precursors. The polypeptide is Lipid A 4'-phosphatase (Rhizobium etli (strain ATCC 51251 / DSM 11541 / JCM 21823 / NBRC 15573 / CFN 42)).